The chain runs to 685 residues: Threonine--tRNA ligase (685 aa).

In terms of domain architecture, TGS spans 1–65 (MSTPASAAPA…DTDVEVEPVA (65 aa)). A catalytic region spans residues 262–568 (DHRKLGSELD…LTEHYAGAFP (307 aa)). Positions 367, 418, and 545 each coordinate Zn(2+).

The protein belongs to the class-II aminoacyl-tRNA synthetase family. In terms of assembly, homodimer. Requires Zn(2+) as cofactor.

It is found in the cytoplasm. The catalysed reaction is tRNA(Thr) + L-threonine + ATP = L-threonyl-tRNA(Thr) + AMP + diphosphate + H(+). Catalyzes the attachment of threonine to tRNA(Thr) in a two-step reaction: L-threonine is first activated by ATP to form Thr-AMP and then transferred to the acceptor end of tRNA(Thr). Also edits incorrectly charged L-seryl-tRNA(Thr). This chain is Threonine--tRNA ligase, found in Rhodococcus jostii (strain RHA1).